Here is a 257-residue protein sequence, read N- to C-terminus: MLITISPAKTLDYTSPLATTRYTQPELLDYSSQLISVCKKLTPAHIASLMSISDKLADLNAGRFSEWHPDFTPENARQALLAFKGDVYTGLAAESFSEDDFDFAQQHLRMLSGLYGVLRPLDLMQPYRLEMGTKLENKAGKDLYSFWGDTITEKLNQALHAQGDDVLINLASDEYFKAVKPKNLNARLIKPVFLDEKNGKFKVISFYAKKARGLMSRFIIQNRLTQPEQLKAFNLEGYAFEAADSSANELVFKRHEQ.

The protein belongs to the UPF0246 family.

This Pectobacterium atrosepticum (strain SCRI 1043 / ATCC BAA-672) (Erwinia carotovora subsp. atroseptica) protein is UPF0246 protein ECA3888.